Reading from the N-terminus, the 264-residue chain is Tritrans,polycis-undecaprenyl-diphosphate synthase (geranylgeranyl-diphosphate specific) (264 aa).

Residue D43 is part of the active site. D43 contacts Mg(2+). Substrate contacts are provided by residues 44-47, W48, H60, and 88-90; these read GNRR and STE. N91 (proton acceptor) is an active-site residue. Substrate is bound by residues F92, R94, R213, and 219–221; that span reads RIS. E232 serves as a coordination point for Mg(2+).

The protein belongs to the UPP synthase family. In terms of assembly, homodimer. Requires Mg(2+) as cofactor.

The enzyme catalyses geranylgeranyl diphosphate + 7 isopentenyl diphosphate = tri-trans,hepta-cis-undecaprenyl diphosphate + 7 diphosphate. Functionally, catalyzes the sequential condensation of isopentenyl diphosphate (IPP) with geranylgeranyl diphosphate (GGPP) to yield (2Z,6Z,10Z,14Z,18Z,22Z,26Z,30E,34E,38E)-undecaprenyl diphosphate (tritrans,heptacis-UPP). It is probably the precursor of glycosyl carrier lipids. The polypeptide is Tritrans,polycis-undecaprenyl-diphosphate synthase (geranylgeranyl-diphosphate specific) (Pyrococcus furiosus (strain ATCC 43587 / DSM 3638 / JCM 8422 / Vc1)).